Reading from the N-terminus, the 125-residue chain is Transposase for transposon Tn554 (125 aa).

Its function is as follows. One of three proteins encoded by transposon Tn554 required for its transposition. The chain is Transposase for transposon Tn554 (tnpC1) from Staphylococcus aureus (strain Mu50 / ATCC 700699).